Consider the following 281-residue polypeptide: Phosphate import ATP-binding protein PstB (281 aa).

The 244-residue stretch at 33–276 folds into the ABC transporter domain; the sequence is FKIENLSLWY…PQLKRTRDYI (244 aa). Position 67–74 (67–74) interacts with ATP; the sequence is GPSGCGKS.

This sequence belongs to the ABC transporter superfamily. Phosphate importer (TC 3.A.1.7) family. As to quaternary structure, the complex is composed of two ATP-binding proteins (PstB), two transmembrane proteins (PstC and PstA) and a solute-binding protein (PstS).

It localises to the cell membrane. It catalyses the reaction phosphate(out) + ATP + H2O = ADP + 2 phosphate(in) + H(+). Functionally, part of the ABC transporter complex PstSACB involved in phosphate import. Responsible for energy coupling to the transport system. In Mycoplasma mobile (strain ATCC 43663 / 163K / NCTC 11711) (Mesomycoplasma mobile), this protein is Phosphate import ATP-binding protein PstB.